A 182-amino-acid chain; its full sequence is Large ribosomal subunit protein uL5 (182 aa).

As to quaternary structure, part of the 50S ribosomal subunit; part of the 5S rRNA/uL5/uL18/bL25 (TL7) subcomplex; has also been isolated as a complex with 5S rRNA, bL25 (TL7) and DNA binding protein II. Forms a bridge to the 30S subunit in the 70S ribosome, contacting protein uS13; this bridge is straddled by the 5S rRNA. Contacts the P site tRNA.

Functionally, this is one of the proteins that bind and probably mediate the attachment of the 5S RNA into the large ribosomal subunit, where it forms part of the central protuberance. In the 70S ribosome it contacts protein S13 of the 30S subunit (forming bridge B1b) connecting the head of the 30S subunit to the top of the 50S subunit. The bridge itself contacts the P site tRNA and is implicated in movement during ribosome translocation. Also contacts the P site tRNA independently of the intersubunit bridge; the 5S rRNA and some of its associated proteins might help stabilize positioning of ribosome-bound tRNAs. This is Large ribosomal subunit protein uL5 (rplE) from Thermus thermophilus (strain ATCC 27634 / DSM 579 / HB8).